Consider the following 154-residue polypeptide: Myoglobin (154 aa).

The Globin domain occupies 2–148; sequence GLSDAEWQLV…FRNDIAAKYK (147 aa). At S4 the chain carries Phosphoserine. Position 65 (H65) interacts with nitrite. H65 serves as a coordination point for O2. T68 bears the Phosphothreonine mark. Heme b is bound at residue H94.

Belongs to the globin family. In terms of assembly, monomeric.

It localises to the cytoplasm. The protein localises to the sarcoplasm. It carries out the reaction Fe(III)-heme b-[protein] + nitric oxide + H2O = Fe(II)-heme b-[protein] + nitrite + 2 H(+). It catalyses the reaction H2O2 + AH2 = A + 2 H2O. Functionally, monomeric heme protein which primary function is to store oxygen and facilitate its diffusion within muscle tissues. Reversibly binds oxygen through a pentacoordinated heme iron and enables its timely and efficient release as needed during periods of heightened demand. Depending on the oxidative conditions of tissues and cells, and in addition to its ability to bind oxygen, it also has a nitrite reductase activity whereby it regulates the production of bioactive nitric oxide. Under stress conditions, like hypoxia and anoxia, it also protects cells against reactive oxygen species thanks to its pseudoperoxidase activity. The polypeptide is Myoglobin (MB) (Orycteropus afer (Aardvark)).